A 318-amino-acid chain; its full sequence is NADH-ubiquinone oxidoreductase chain 1 (318 aa).

Transmembrane regions (helical) follow at residues 2-22, 70-90, 100-120, 136-156, 172-192, 222-242, 253-273, and 294-314; these read FMIN…FLTL, MFII…SPLP, LGVL…LWSG, VAQT…VLLM, LWLL…TLAE, LFFL…AILF, ELYT…FLWI, and LPLT…TASI.

Belongs to the complex I subunit 1 family. Core subunit of respiratory chain NADH dehydrogenase (Complex I) which is composed of 45 different subunits.

Its subcellular location is the mitochondrion inner membrane. It carries out the reaction a ubiquinone + NADH + 5 H(+)(in) = a ubiquinol + NAD(+) + 4 H(+)(out). Functionally, core subunit of the mitochondrial membrane respiratory chain NADH dehydrogenase (Complex I) which catalyzes electron transfer from NADH through the respiratory chain, using ubiquinone as an electron acceptor. Essential for the catalytic activity and assembly of complex I. This chain is NADH-ubiquinone oxidoreductase chain 1 (MT-ND1), found in Balaenoptera musculus (Blue whale).